A 136-amino-acid polypeptide reads, in one-letter code: Late embryogenesis abundant protein D-7 (136 aa).

Disordered stretches follow at residues 1–108 and 117–136; these read MASH…AQGA and GMAD…TRKD. A compositionally biased stretch (basic and acidic residues) spans 11–58; that stretch reads GRAEGRAHEKGEQMKESMKEKAEAAKQKTMETAEAAKQKTMETAEAAK. LEA 11-mer repeat repeat units follow at residues 31–41, 42–52, 53–63, 64–74, and 75–85; these read KAEAAKQKTME, TAEAAKQKTME, TAEAAKQKTRG, AAETTNDKTKQ, and TAGAARGKAEE.

Belongs to the LEA type 4 family.

Its function is as follows. LEA proteins are late embryonic proteins abundant in higher plant seed embryos. There are two subsets of LEA proteins (5a and 5b), the first ones are expressed when the cotyledon weight reach 80 mg and the second set are expressed above 100 mg. The function of those proteins is not known. The sequence is that of Late embryogenesis abundant protein D-7 from Gossypium hirsutum (Upland cotton).